A 229-amino-acid chain; its full sequence is Heptaprenylglyceryl phosphate synthase (229 aa).

2 residues coordinate Mg(2+): Asp-13 and Thr-39.

Belongs to the GGGP/HepGP synthase family. Homodimer. Mg(2+) is required as a cofactor.

It carries out the reaction sn-glycerol 1-phosphate + all-trans-heptaprenyl diphosphate = 3-heptaprenyl-sn-glycero-1-phosphate + diphosphate. It participates in membrane lipid metabolism; glycerophospholipid metabolism. Functionally, prenyltransferase that catalyzes in vivo the transfer of the heptaprenyl moiety of heptaprenyl pyrophosphate (HepPP; 35 carbon atoms) to the C3 hydroxyl of sn-glycerol-1-phosphate (G1P), producing heptaprenylglyceryl phosphate (HepGP). This reaction is an ether-bond-formation step in the biosynthesis of archaea-type G1P-based membrane lipids found in Bacillales. The sequence is that of Heptaprenylglyceryl phosphate synthase from Lysinibacillus sphaericus (strain C3-41).